We begin with the raw amino-acid sequence, 1098 residues long: Restriction of telomere capping protein 1 (1098 aa).

A disordered region spans residues 26 to 57; it reads NSSTPQSHEISPSSSLGSSRSNKQTNQYSSQE. A compositionally biased stretch (low complexity) spans 32 to 46; that stretch reads SHEISPSSSLGSSRS. Over residues 47 to 57 the composition is skewed to polar residues; sequence NKQTNQYSSQE. WD repeat units follow at residues 131-170, 176-215, 222-266, 275-314, 367-417, and 432-473; these read ATNK…QSKV, DHSR…TKPV, LHSD…GGKV, LHTG…SRNT, DPTI…SFNS, and IEDL…TYED. Residues 535-562 show a composition bias toward polar residues; that stretch reads QNEPVTPSSSSSIPNMHLSSSRPKLTRN. Positions 535 to 597 are disordered; that stretch reads QNEPVTPSSS…YSSPQYKRNQ (63 aa). A compositionally biased stretch (low complexity) spans 563 to 593; the sequence is TSQTTQDSSSSQLSSVIPPPSSSQTYSSPQY. A WD 7 repeat occupies 635-673; the sequence is PDGFTLVDVCLINASVAASVNNNRTSQVWKLLAVSIQEE. Polar residues predominate over residues 731–742; it reads KSTSTSGSQFGK. Residues 731-843 form a disordered region; that stretch reads KSTSTSGSQF…LKSSPPSVGV (113 aa). Low complexity predominate over residues 768–778; the sequence is SRNSSFSTTSF. The segment covering 779 to 804 has biased composition (basic and acidic residues); sequence RLKEQERREHELRNTQNFRDENEKVS. Positions 806–816 are enriched in polar residues; that stretch reads HSKSAPISISS. A WD 8 repeat occupies 891 to 934; the sequence is DVSNGVTMMGTSGLSLALKRNKTNEEGCEFVKVWKFKSLLRKSL. An RING-type; degenerate zinc finger spans residues 1050 to 1093; that stretch reads CVYCNEPCKGLAVTVGLKCGHQGHFGCLKEWFIEDQNTECPGGC.

This sequence belongs to the WD repeat RTC1 family.

It localises to the vacuole. Functionally, may be involved in a process influencing telomere capping. This Candida dubliniensis (strain CD36 / ATCC MYA-646 / CBS 7987 / NCPF 3949 / NRRL Y-17841) (Yeast) protein is Restriction of telomere capping protein 1 (RTC1).